The following is a 310-amino-acid chain: Homoserine kinase (310 aa).

91 to 101 (PLARGLGSSAA) is an ATP binding site.

The protein belongs to the GHMP kinase family. Homoserine kinase subfamily.

The protein resides in the cytoplasm. It catalyses the reaction L-homoserine + ATP = O-phospho-L-homoserine + ADP + H(+). The protein operates within amino-acid biosynthesis; L-threonine biosynthesis; L-threonine from L-aspartate: step 4/5. Its function is as follows. Catalyzes the ATP-dependent phosphorylation of L-homoserine to L-homoserine phosphate. The sequence is that of Homoserine kinase from Bacillus pumilus (strain SAFR-032).